Reading from the N-terminus, the 207-residue chain is Guanylate kinase (207 aa).

One can recognise a Guanylate kinase-like domain in the interval 10–187 (GFFIVLSAAS…AVERLQVIYQ (178 aa)). 17-24 (AASGTGKT) contacts ATP.

This sequence belongs to the guanylate kinase family.

The protein resides in the cytoplasm. The enzyme catalyses GMP + ATP = GDP + ADP. Functionally, essential for recycling GMP and indirectly, cGMP. This chain is Guanylate kinase, found in Syntrophus aciditrophicus (strain SB).